The following is a 290-amino-acid chain: Arylamine N-acetyltransferase 2 (290 aa).

Cys-68 (acyl-thioester intermediate) is an active-site residue. Residues Ser-103 and Gly-104 each coordinate CoA. Residue 106 to 107 participates in substrate binding; that stretch reads IH. Active-site residues include His-107 and Asp-122. Residue Tyr-208 coordinates CoA.

Belongs to the arylamine N-acetyltransferase family.

It localises to the cytoplasm. The enzyme catalyses an arylamine + acetyl-CoA = an N-acetylarylamine + CoA. It catalyses the reaction an N-hydroxyarylamine + acetyl-CoA = an N-acetoxyarylamine + CoA. Catalyzes the N- or O-acetylation of various arylamine and heterocyclic amine substrates, and participates in the detoxification of a plethora of hydrazine and arylamine drugs. The sequence is that of Arylamine N-acetyltransferase 2 (Nat2) from Mus musculus (Mouse).